The primary structure comprises 147 residues: Small ribosomal subunit protein uS12 (147 aa).

This sequence belongs to the universal ribosomal protein uS12 family. In terms of assembly, part of the 30S ribosomal subunit.

Functionally, with S4 and S5 plays an important role in translational accuracy. Located at the interface of the 30S and 50S subunits. The chain is Small ribosomal subunit protein uS12 from Methanococcus maripaludis (strain C5 / ATCC BAA-1333).